Reading from the N-terminus, the 134-residue chain is Small ribosomal subunit protein uS11 (134 aa).

It belongs to the universal ribosomal protein uS11 family. As to quaternary structure, part of the 30S ribosomal subunit. Interacts with proteins S7 and S18. Binds to IF-3.

In terms of biological role, located on the platform of the 30S subunit, it bridges several disparate RNA helices of the 16S rRNA. Forms part of the Shine-Dalgarno cleft in the 70S ribosome. This is Small ribosomal subunit protein uS11 from Frankia casuarinae (strain DSM 45818 / CECT 9043 / HFP020203 / CcI3).